The chain runs to 94 residues: Large ribosomal subunit protein uL22 (94 aa).

The protein belongs to the universal ribosomal protein uL22 family. In terms of assembly, part of the 50S ribosomal subunit.

Functionally, this protein binds specifically to 23S rRNA; its binding is stimulated by other ribosomal proteins, e.g. L4, L17, and L20. It is important during the early stages of 50S assembly. It makes multiple contacts with different domains of the 23S rRNA in the assembled 50S subunit and ribosome. Its function is as follows. The globular domain of the protein is located near the polypeptide exit tunnel on the outside of the subunit, while an extended beta-hairpin is found that lines the wall of the exit tunnel in the center of the 70S ribosome. This is Large ribosomal subunit protein uL22 (rplV) from Tomato big bud phytoplasma.